A 205-amino-acid polypeptide reads, in one-letter code: Potassium-transporting ATPase KdpC subunit (205 aa).

Residues 7 to 27 (PAIVILVALTIITGLIYPLAM) form a helical membrane-spanning segment.

This sequence belongs to the KdpC family. The system is composed of three essential subunits: KdpA, KdpB and KdpC.

It localises to the cell inner membrane. Its function is as follows. Part of the high-affinity ATP-driven potassium transport (or Kdp) system, which catalyzes the hydrolysis of ATP coupled with the electrogenic transport of potassium into the cytoplasm. This subunit acts as a catalytic chaperone that increases the ATP-binding affinity of the ATP-hydrolyzing subunit KdpB by the formation of a transient KdpB/KdpC/ATP ternary complex. The protein is Potassium-transporting ATPase KdpC subunit of Nitrobacter hamburgensis (strain DSM 10229 / NCIMB 13809 / X14).